The primary structure comprises 651 residues: Choline transporter-like protein 1 (651 aa).

Residues 1-25 are Cytoplasmic-facing; that stretch reads MGCCGSTQNSKRDWRPLEEHSCTDI. Residues 26–46 form a helical membrane-spanning segment; the sequence is PWLLLFILFCVGMGFICGFSI. Residues 47-208 lie on the Extracellular side of the membrane; it reads ATGAASRLVF…RLISGVMTSK (162 aa). Residues Asn131 and Asn176 are each glycosylated (N-linked (GlcNAc...) asparagine). Residues 209–229 form a helical membrane-spanning segment; the sequence is EIIMGLCLLSLVLSMILMVII. Topologically, residues 230–234 are cytoplasmic; it reads RYISR. A helical transmembrane segment spans residues 235–255; the sequence is VLVWIITILVVLGSLGGTGVL. Residues 256–284 lie on the Extracellular side of the membrane; it reads WWLYADNKKSLNENLPPDQLQVSKDNLQA. The chain crosses the membrane as a helical span at residues 285-305; sequence LLVYAIAATVFTVILLLMMLI. At 306–311 the chain is on the cytoplasmic side; that stretch reads MRKRVA. Residues 312–332 form a helical membrane-spanning segment; that stretch reads LTIALFNVAGKVFIHLPLLVF. Residues 333-334 are Extracellular-facing; it reads QP. Residues 335 to 355 form a helical membrane-spanning segment; it reads FWTFFALLLFWVYWVMVLLFL. Topologically, residues 356–376 are cytoplasmic; the sequence is GTAGDPFTNEQGFVEFRINGP. A helical transmembrane segment spans residues 377 to 397; it reads LQYMWWYHLVGLIWISEFILA. The Extracellular portion of the chain corresponds to 398-438; it reads CQQMTIAGAVVTYYFTRNKNDLPFTPILASVNRLIRYHLGT. Residues 439–459 form a helical membrane-spanning segment; that stretch reads VAKGAFIITLVKIPRMILMYI. Residues 460–533 are Cytoplasmic-facing; the sequence is HSQLKGKENA…RVAAINTVGD (74 aa). Residues 534–554 traverse the membrane as a helical segment; the sequence is FMLFLGKILIVSCTGLAGIML. At 555–562 the chain is on the extracellular side; that stretch reads LNYQRDYT. A helical transmembrane segment spans residues 563–583; that stretch reads VWVLPLIIVCLFAFLVAHCFL. At 584 to 651 the chain is on the cytoplasmic side; sequence SIYEMVVDVL…KPMASGTSTA (68 aa). Positions 629–651 are disordered; it reads LKEPGSTAEGRELKPMASGTSTA.

Belongs to the CTL (choline transporter-like) family.

It is found in the cell membrane. It localises to the mitochondrion outer membrane. It catalyses the reaction choline(out) + n H(+)(in) = choline(in) + n H(+)(out). The catalysed reaction is ethanolamine(out) + n H(+)(in) = ethanolamine(in) + n H(+)(out). In terms of biological role, choline/H+ antiporter. Also acts as a high-affinity ethanolamine/H+ antiporter, regulating the supply of extracellular ethanolamine (Etn) for the CDP-Etn pathway, redistribute intracellular Etn and balance the CDP-Cho and CDP-Etn arms of the Kennedy pathway. Involved in membrane synthesis and myelin production. The sequence is that of Choline transporter-like protein 1 (slc44a1) from Xenopus laevis (African clawed frog).